Here is a 270-residue protein sequence, read N- to C-terminus: Interleukin-1 beta (270 aa).

Residues 1-118 constitute a propeptide that is removed on maturation; that stretch reads MATVPEPTSE…VYDDDAFVCD (118 aa).

Belongs to the IL-1 family. As to quaternary structure, monomer. In its precursor form, weakly interacts with full-length MEFV; the mature cytokine does not interact at all. Interacts with integrins ITGAV:ITGBV and ITGA5:ITGB1; integrin-binding is required for IL1B signaling. Interacts with cargo receptor TMED10; the interaction is direct and is required for the secretion of IL1B mature form. Interacts with HSP90AB1; the interaction facilitates cargo translocation into the ERGIC. Interacts with HSP90B1; the interaction facilitates cargo translocation into the ERGIC.

The protein resides in the cytoplasm. Its subcellular location is the cytosol. It localises to the secreted. The protein localises to the lysosome. It is found in the extracellular exosome. Potent pro-inflammatory cytokine. Initially discovered as the major endogenous pyrogen, induces prostaglandin synthesis, neutrophil influx and activation, T-cell activation and cytokine production, B-cell activation and antibody production, and fibroblast proliferation and collagen production. Promotes Th17 differentiation of T-cells. Synergizes with IL12/interleukin-12 to induce IFNG synthesis from T-helper 1 (Th1) cells. Plays a role in angiogenesis by inducing VEGF production synergistically with TNF and IL6. Involved in transduction of inflammation downstream of pyroptosis: its mature form is specifically released in the extracellular milieu by passing through the gasdermin-D (GSDMD) pore. The chain is Interleukin-1 beta (IL1B) from Eumetopias jubatus (Steller sea lion).